Consider the following 239-residue polypeptide: 1-(5-phosphoribosyl)-5-[(5-phosphoribosylamino)methylideneamino] imidazole-4-carboxamide isomerase (239 aa).

The active-site Proton acceptor is the D9. D131 acts as the Proton donor in catalysis.

This sequence belongs to the HisA/HisF family.

It is found in the cytoplasm. It carries out the reaction 1-(5-phospho-beta-D-ribosyl)-5-[(5-phospho-beta-D-ribosylamino)methylideneamino]imidazole-4-carboxamide = 5-[(5-phospho-1-deoxy-D-ribulos-1-ylimino)methylamino]-1-(5-phospho-beta-D-ribosyl)imidazole-4-carboxamide. Its pathway is amino-acid biosynthesis; L-histidine biosynthesis; L-histidine from 5-phospho-alpha-D-ribose 1-diphosphate: step 4/9. The chain is 1-(5-phosphoribosyl)-5-[(5-phosphoribosylamino)methylideneamino] imidazole-4-carboxamide isomerase from Bacteroides fragilis (strain ATCC 25285 / DSM 2151 / CCUG 4856 / JCM 11019 / LMG 10263 / NCTC 9343 / Onslow / VPI 2553 / EN-2).